Reading from the N-terminus, the 505-residue chain is AMP phosphorylase 2 (505 aa).

AMP contacts are provided by residues Gly-169, 195–200 (SRAITT), Thr-204, Ser-265, and Lys-289.

The protein belongs to the thymidine/pyrimidine-nucleoside phosphorylase family. Type 2 subfamily.

It carries out the reaction AMP + phosphate = alpha-D-ribose 1,5-bisphosphate + adenine. The catalysed reaction is CMP + phosphate = cytosine + alpha-D-ribose 1,5-bisphosphate. It catalyses the reaction UMP + phosphate = alpha-D-ribose 1,5-bisphosphate + uracil. Its function is as follows. Catalyzes the conversion of AMP and phosphate to adenine and ribose 1,5-bisphosphate (R15P). Exhibits phosphorylase activity toward CMP and UMP in addition to AMP. Functions in an archaeal AMP degradation pathway, together with R15P isomerase and RubisCO. This is AMP phosphorylase 2 from Archaeoglobus fulgidus (strain ATCC 49558 / DSM 4304 / JCM 9628 / NBRC 100126 / VC-16).